The chain runs to 496 residues: Lysine--tRNA ligase (496 aa).

E409 and E416 together coordinate Mg(2+).

Belongs to the class-II aminoacyl-tRNA synthetase family. Homodimer. The cofactor is Mg(2+).

Its subcellular location is the cytoplasm. The catalysed reaction is tRNA(Lys) + L-lysine + ATP = L-lysyl-tRNA(Lys) + AMP + diphosphate. The protein is Lysine--tRNA ligase of Streptococcus pneumoniae serotype 4 (strain ATCC BAA-334 / TIGR4).